The primary structure comprises 115 residues: Mediator of RNA polymerase II transcription subunit 11 (115 aa).

Positions 56–107 form a coiled coil; the sequence is YERLDKSTTQLRKEIQLLDENVGTRLLPINVNKKALGQDTEKMEEQLDLLSA.

It belongs to the mediator complex subunit 11 family. As to quaternary structure, component of the Mediator complex, which is composed of at least 21 subunits that form three structurally distinct submodules. The Mediator head module contains MED6, MED8, MED11, SRB4/MED17, SRB5/MED18, ROX3/MED19, SRB2/MED20 and SRB6/MED22, the middle module contains MED1, MED4, NUT1/MED5, MED7, CSE2/MED9, NUT2/MED10, SRB7/MED21 and SOH1/MED31, and the tail module contains MED2, PGD1/MED3, RGR1/MED14, GAL11/MED15 and SIN4/MED16. The head and the middle modules interact directly with RNA polymerase II, whereas the elongated tail module interacts with gene-specific regulatory proteins. MED11 forms a heterodimer with SRB6/MED22. The MED11/22 heterodimer binds to and stabilizes the central head subunit SRB4/MED17. Interacts with TFIIH subunit RAD3.

Its subcellular location is the nucleus. Its function is as follows. Component of the Mediator complex, a coactivator involved in the regulated transcription of nearly all RNA polymerase II-dependent genes. Mediator functions as a bridge to convey information from gene-specific regulatory proteins to the basal RNA polymerase II transcription machinery. The Mediator complex, having a compact conformation in its free form, is recruited to promoters by direct interactions with regulatory proteins and serves for the assembly of a functional pre-initiation complex (PIC) with RNA polymerase II and the general transcription factors. The Mediator complex unfolds to an extended conformation and partially surrounds RNA polymerase II, specifically interacting with the unphosphorylated form of the C-terminal domain (CTD) of RNA polymerase II. The Mediator complex dissociates from the RNA polymerase II holoenzyme and stays at the promoter when transcriptional elongation begins. The essential MED11/22 heterodimer specifically functions in promoting stable PIC formation. The polypeptide is Mediator of RNA polymerase II transcription subunit 11 (MED11) (Saccharomyces cerevisiae (strain ATCC 204508 / S288c) (Baker's yeast)).